The sequence spans 101 residues: Protein RADIALIS-like 2 (101 aa).

One can recognise an SANT domain in the interval Tyr-9–Glu-64. The tract at residues Gly-69 to Gln-101 is disordered.

Expressed in the funiculus of ovules and in embryos. In young ovules, expression is observed in the adaxial side of the funiculus (the stalk connecting the embryo sac to the placenta). Also expressed in heart-stage embryos, in the cortex and endodermis of the hypocotyl region but not in the cotyledons, shoot and root apical meristems, provasculature or epidermis. Not detected in young seedlings, mature roots or in young floral primordia.

The protein localises to the nucleus. Its function is as follows. Probable transcription factor. Required for female gametophyte development. This chain is Protein RADIALIS-like 2 (RL2), found in Arabidopsis thaliana (Mouse-ear cress).